Here is a 446-residue protein sequence, read N- to C-terminus: Glutamine synthetase (446 aa).

The region spanning 15-102 (RDIRFVRLWF…MFCDITMPDG (88 aa)) is the GS beta-grasp domain. Residues 109 to 446 (PRHVLRRQLT…PYELRTYLSL (338 aa)) form the GS catalytic domain. Mg(2+) is bound by residues E132 and E134. ATP is bound at residue E184. 2 residues coordinate Mg(2+): E189 and E196. L-glutamate is bound at residue G241. Residue H245 participates in Mg(2+) binding. Residues 247–249 (HMS) and S249 contribute to the ATP site. The L-glutamate site is built by R298, E304, and R316. R316 and R321 together coordinate ATP. Residue E336 coordinates Mg(2+). Position 338 (R338) interacts with L-glutamate.

This sequence belongs to the glutamine synthetase family. As to quaternary structure, oligomer of 12 subunits arranged in the form of two hexagons. In its feedback-inhibited form, interacts with TnrA in order to block its DNA-binding activity. The cofactor is Mg(2+).

It is found in the cytoplasm. It carries out the reaction L-glutamate + NH4(+) + ATP = L-glutamine + ADP + phosphate + H(+). Its activity is regulated as follows. Inhibited by glutamine. Glutamine synthetase (GS) is an unusual multitasking protein that functions as an enzyme, a transcription coregulator, and a chaperone in ammonium assimilation and in the regulation of genes involved in nitrogen metabolism. It catalyzes the ATP-dependent biosynthesis of glutamine from glutamate and ammonia. Feedback-inhibited GlnA also interacts with and regulates the activity of the transcriptional regulator TnrA. During nitrogen limitation, TnrA is in its DNA-binding active state and turns on the transcription of genes required for nitrogen assimilation. Under conditions of nitrogen excess, feedback-inhibited GlnA forms a stable complex with TnrA, which inhibits its DNA-binding activity. In contrast, feedback-inhibited GlnA acts as a chaperone to stabilize the DNA-binding activity of GlnR, which represses the transcription of nitrogen assimilation genes. This Mycobacterium bovis (strain ATCC BAA-935 / AF2122/97) protein is Glutamine synthetase.